The following is a 1865-amino-acid chain: MLLPATGASRSAAIMSDTDSDEDSSGGGPFSLTGFLFGNINGAGQLEGESVLDDECKKHLAGLGALGLGSLITELTANEELAGTDGALVNDEGWIRSREDAVDYSDINEVAEDESRRYQQTMGSLQPLCHSADYDEDDYDADCEDIDCKLMPPPPPPPGPVKKEKDQDGLTGEKVDFSSSSDSESEMGPQEAAQAESKDGKLTLPLAGIMQHDATKLLPSVTELFPEFRPGKVLRFLRLFGPGKNVPSVWRSARRKRKKKHREPIQEEQIQEEECSVELEVNQKSLWNYDYAPPPPPEQCLSDDEITMMAPVESKFSQSTGDTDKVMDTKPRVAEWRYGPARLWYDMLGVPEDGSGFDYGFKMRKTEHEPAIKCKMMTKLRKLEESNGIDLLADENFLMVTQLHWEDDIIWDGEDVKHKGTKPQRASLAGWLPSSMTRNAMAYNVQQGFAATLDDDKPWYSIFPIDNEDLVYGRWEDNIIWDAQAMPRILEPPVLTLDPNDENLILEIPDEKEEATSNSPSKENKKESSLKKSRILLGKTGVIKEEPQQNMSQPEVKDPWNLSNDEYYYPKQQGLRGTFGGNIIQHSIPAVELRQPFFPTHMGPIKLRQFHRPPLKKYSFGALSQPGPHSVQPLLKHIKKKAKMREQERQASGGGEMFFMRTPQDLTGKDGDLILAEYSEENGPLMMQVGMATKIKNYYKRKPGKDPGAPDCKYGETVYCHTSPFLGSLHPGQLLQAFENNLFRAPIYLHKMPETDFLIIRTRQGYYIRELVDIFVVGQQCPLFEVPGPNSKRANTHIRDFLQVFIYRLFWKSKDRPRRIRMEDIKKAFPSHSESSIRKRLKLCADFKRTGMDSNWWVLKSDFRLPTEEEIRAMVSPEQCCAYYSMIAAEQRLKDAGYGEKSFFAPEEENEEDFQMKIDDEVRTAPWNTTRAFIAAMKGKCLLEVTGVADPTGCGEGFSYVKIPNKPTQQKDDKEPQPVKKTVTGTDADLRRLSLKNAKQLLRKFGVPEEEIKKLSRWEVIDVVRTMSTEQARSGEGPMSKFARGSRFSVAEHQERYKEECQRIFDLQNKVLSSTEVLSTDTDSSSAEDSDFEEMGKNIENMLQNKKTSSQLSREREEQERKELQRMLLAAGSASAGNNHRDDDTASVTSLNSSATGRCLKIYRTFRDEEGKEYVRCETVRKPAVIDAYVRIRTTKDEEFIRKFALFDEQHREEMRKERRRIQEQLRRLKRNQEKEKLKGPPEKKPKKMKERPDLKLKCGACGAIGHMRTNKFCPLYYQTNAPPSNPVAMTEEQEEELEKTVIHNDNEELIKVEGTKIVLGKQLIESADEVRRKSLVLKFPKQQLPPKKKRRVGTTVHCDYLNRPHKSIHRRRTDPMVTLSSILESIINDMRDLPNTYPFHTPVNAKVVKDYYKIITRPMDLQTLRENVRKRLYPSREEFREHLELIVKNSATYNGPKHSLTQISQSMLDLCDEKLKEKEDKLARLEKAINPLLDDDDQVAFSFILDNIVTQKMMAVPDSWPFHHPVNKKFVPDYYKVIVSPMDLETIRKNISKHKYQSRESFLDDVNLILANSVKYNGSESQYTKTAQEIVNVCYQTLTEYDEHLTQLEKDICTAKEAALEEAELESLDPMTPGPYTPQPPDLYDNSTSLSVSRDASVYQDESNMSVLDIPSATSEKQLTQEGEDGDGDLADEEEGTVQQPQASVLYEDLLMSEGEDDEEDAGSDEEGDNPFSAIQLSESGSDSDVGSGSIRPKQPRVLQENTRMGMENEESMMSYEGDGGEVSRGLEDSNISYGSYEEPDPKSNTQDTSFSSIGGYEVSEEEEDEEEQRSGPSVLSQVHLSEDEEDSEDFHSIAGDSDMDSDE.

The interval 1–27 (MLLPATGASRSAAIMSDTDSDEDSSGG) is disordered. Residues 1–409 (MLLPATGASR…VTQLHWEDDI (409 aa)) form the Protein kinase 1 domain. Ser-131 bears the Phosphoserine; by autocatalysis mark. The interval 144–199 (EDIDCKLMPPPPPPPGPVKKEKDQDGLTGEKVDFSSSSDSESEMGPQEAAQAESKD) is disordered. Residues 151 to 160 (MPPPPPPPGP) are compositionally biased toward pro residues. Basic and acidic residues predominate over residues 161–176 (VKKEKDQDGLTGEKVD). Ser-302 is subject to Phosphoserine; by autocatalysis. Residues 509–530 (PDEKEEATSNSPSKENKKESSL) form a disordered region. Residues 512-971 (KEEATSNSPS…KIPNKPTQQK (460 aa)) form a histone acetyltransferase (HAT) region. At Lys-539 the chain carries N6-acetyllysine. Glycyl lysine isopeptide (Lys-Gly) (interchain with G-Cter in SUMO2) cross-links involve residues Lys-544 and Lys-557. Disordered stretches follow at residues 964-983 (PNKP…KKTV) and 1228-1252 (RLKR…MKER). Basic and acidic residues-rich tracts occupy residues 969–978 (QQKDDKEPQP) and 1228–1244 (RLKR…PPEK). A DNA-binding region (HMG box) is located at residues 1190 to 1268 (VRIRTTKDEE…CGACGAIGHM (79 aa)). The segment at 1337–1624 (VLKFPKQQLP…TAKEAALEEA (288 aa)) is interaction with ASF1A and ASF1B. Positions 1346–1353 (PPKKKRRV) match the Nuclear localization signal motif. Bromo domains lie at 1371–1479 (RRRT…LKEK) and 1493–1602 (LLDD…LTEY). Residues 1420–1865 (MDLQTLRENV…AGDSDMDSDE (446 aa)) enclose the Protein kinase 2 domain. A disordered region spans residues 1625 to 1865 (ELESLDPMTP…AGDSDMDSDE (241 aa)). Positions 1633–1642 (TPGPYTPQPP) are enriched in pro residues. Residues 1646–1682 (DNSTSLSVSRDASVYQDESNMSVLDIPSATSEKQLTQ) are compositionally biased toward polar residues. 2 positions are modified to phosphoserine: Ser-1664 and Ser-1667. 2 stretches are compositionally biased toward acidic residues: residues 1683–1697 (EGED…EEEG) and 1715–1730 (EGED…EEGD). The span at 1739–1751 (SESGSDSDVGSGS) shows a compositional bias: low complexity. Residues Ser-1773, Ser-1776, and Ser-1794 each carry the phosphoserine modification. Positions 1804-1814 (KSNTQDTSFSS) are enriched in polar residues. Acidic residues predominate over residues 1820 to 1829 (VSEEEEDEEE). At Ser-1821 the chain carries Phosphoserine. The segment covering 1832-1841 (SGPSVLSQVH) has biased composition (polar residues).

The protein belongs to the TAF1 family. As to quaternary structure, component of the TFIID basal transcription factor complex, composed of TATA-box-binding protein TBP, and a number of TBP-associated factors (TAFs), including TAF1, TAF2, TAF3, TAF4, TAF5, TAF6, TAF7, TAF8, TAF9, TAF10, TAF11, TAF12 and TAF13. Interacts with TAF7; the interaction is direct. TAF1, when part of the TFIID complex, interacts with C-terminus of TP53. Part of a TFIID-containing RNA polymerase II pre-initiation complex that is composed of TBP and at least GTF2A1, GTF2A2, GTF2E1, GTF2E2, GTF2F1, GTF2H2, GTF2H3, GTF2H4, GTF2H5, GTF2B, TCEA1, ERCC2, ERCC3, TAF1, TAF2, TAF3, TAF4, TAF5, TAF6, TAF7, TAF8, TAF9, TAF10, TAF11, TAF12 and TAF13. Component of some MLL1/MLL complex, at least composed of the core components KMT2A/MLL1, ASH2L, HCFC1/HCF1, WDR5 and RBBP5, as well as the facultative components BACC1, CHD8, E2F6, HSP70, INO80C, KANSL1, LAS1L, MAX, MCRS1, MGA, KAT8/MOF, PELP1, PHF20, PRP31, RING2, RUVB1/TIP49A, RUVB2/TIP49B, SENP3, TAF1, TAF4, TAF6, TAF7, TAF9 and TEX10. RB1 interacts with the N-terminal domain of TAF1. Interacts with ASF1A and ASF1B. Interacts (via bromo domains) with acetylated lysine residues on the N-terminus of histone H1.4, H2A, H2B, H3 and H4 (in vitro). Mg(2+) serves as cofactor. Post-translationally, phosphorylated by casein kinase II in vitro.

It localises to the nucleus. It catalyses the reaction L-seryl-[protein] + ATP = O-phospho-L-seryl-[protein] + ADP + H(+). The enzyme catalyses L-threonyl-[protein] + ATP = O-phospho-L-threonyl-[protein] + ADP + H(+). The catalysed reaction is L-lysyl-[protein] + acetyl-CoA = N(6)-acetyl-L-lysyl-[protein] + CoA + H(+). Autophosphorylates on Ser residues. Inhibited by retinoblastoma tumor suppressor protein, RB1. Binding to TAF1 or CIITA inhibits the histone acetyltransferase activity. Its function is as follows. The TFIID basal transcription factor complex plays a major role in the initiation of RNA polymerase II (Pol II)-dependent transcription. TFIID recognizes and binds promoters with or without a TATA box via its subunit TBP, a TATA-box-binding protein, and promotes assembly of the pre-initiation complex (PIC). The TFIID complex consists of TBP and TBP-associated factors (TAFs), including TAF1, TAF2, TAF3, TAF4, TAF5, TAF6, TAF7, TAF8, TAF9, TAF10, TAF11, TAF12 and TAF13. TAF1 is the largest component and core scaffold of the TFIID complex, involved in nucleating complex assembly. TAF1 forms a promoter DNA binding subcomplex of TFIID, together with TAF7 and TAF2. Contains novel N- and C-terminal Ser/Thr kinase domains which can autophosphorylate or transphosphorylate other transcription factors. Phosphorylates TP53 on 'Thr-55' which leads to MDM2-mediated degradation of TP53. Phosphorylates GTF2A1 and GTF2F1 on Ser residues. Possesses DNA-binding activity. Essential for progression of the G1 phase of the cell cycle. The sequence is that of Transcription initiation factor TFIID subunit 1 from Mesocricetus auratus (Golden hamster).